The following is a 65-amino-acid chain: Hirudin-2B (65 aa).

Residues 1–3 (ITY) form an interaction with thrombin active site region. 3 disulfides stabilise this stretch: C6/C14, C16/C28, and C22/C39. A disordered region spans residues 39-65 (CVTGEGTPKPQSHNDGDFEEIPEEYLQ). Residue T45 is glycosylated (O-linked (GalNAc...) threonine). Residues 55–65 (DFEEIPEEYLQ) form an interaction with fibrinogen-binding exosite of thrombin region. Residues 55–65 (DFEEIPEEYLQ) show a composition bias toward acidic residues. Y63 is subject to Sulfotyrosine.

The protein belongs to the protease inhibitor I14 (hirudin) family.

The protein resides in the secreted. In terms of biological role, hirudin is a potent thrombin-specific protease inhibitor. It forms a stable non-covalent complex with alpha-thrombin, thereby abolishing its ability to cleave fibrinogen. The sequence is that of Hirudin-2B from Hirudo medicinalis (Medicinal leech).